Consider the following 249-residue polypeptide: uncharacterized protein (249 aa).

It localises to the cytoplasm. The protein localises to the nucleus. This is an uncharacterized protein from Schizosaccharomyces pombe (strain 972 / ATCC 24843) (Fission yeast).